We begin with the raw amino-acid sequence, 491 residues long: Carbohydrate ABC transporter substrate-binding protein (491 aa).

4 residues coordinate Zn(2+): Asp-212, His-247, His-252, and Glu-256.

It belongs to the bacterial solute-binding protein 1 family. In terms of assembly, exists as a monomer, homodimer, homotrimer and homotetramer; oligomerization increases with higher protein concentration.

It localises to the cell surface. Probably part of an ABC transporter complex involved in carbohydrate transport. In Streptococcus pneumoniae serotype 4 (strain ATCC BAA-334 / TIGR4), this protein is Carbohydrate ABC transporter substrate-binding protein.